The chain runs to 384 residues: Carbamoyl phosphate synthase small chain (384 aa).

A CPSase region spans residues 1-192 (MPIAAAKPAL…FGPVAEQQGQ (192 aa)). L-glutamine contacts are provided by serine 51, glycine 244, and glycine 246. One can recognise a Glutamine amidotransferase type-1 domain in the interval 196 to 381 (TVVALDFGVK…VKLMRQQKAE (186 aa)). The active-site Nucleophile is cysteine 272. Positions 273, 276, 312, 314, and 315 each coordinate L-glutamine. Residues histidine 354 and glutamate 356 contribute to the active site.

It belongs to the CarA family. As to quaternary structure, composed of two chains; the small (or glutamine) chain promotes the hydrolysis of glutamine to ammonia, which is used by the large (or ammonia) chain to synthesize carbamoyl phosphate. Tetramer of heterodimers (alpha,beta)4.

The catalysed reaction is hydrogencarbonate + L-glutamine + 2 ATP + H2O = carbamoyl phosphate + L-glutamate + 2 ADP + phosphate + 2 H(+). It carries out the reaction L-glutamine + H2O = L-glutamate + NH4(+). The protein operates within amino-acid biosynthesis; L-arginine biosynthesis; carbamoyl phosphate from bicarbonate: step 1/1. Its pathway is pyrimidine metabolism; UMP biosynthesis via de novo pathway; (S)-dihydroorotate from bicarbonate: step 1/3. Its function is as follows. Small subunit of the glutamine-dependent carbamoyl phosphate synthetase (CPSase). CPSase catalyzes the formation of carbamoyl phosphate from the ammonia moiety of glutamine, carbonate, and phosphate donated by ATP, constituting the first step of 2 biosynthetic pathways, one leading to arginine and/or urea and the other to pyrimidine nucleotides. The small subunit (glutamine amidotransferase) binds and cleaves glutamine to supply the large subunit with the substrate ammonia. This Synechocystis sp. (strain ATCC 27184 / PCC 6803 / Kazusa) protein is Carbamoyl phosphate synthase small chain.